The chain runs to 293 residues: Pyridoxal 5'-phosphate synthase subunit PdxS (293 aa).

Asp-23 serves as a coordination point for D-ribose 5-phosphate. Lys-80 (schiff-base intermediate with D-ribose 5-phosphate) is an active-site residue. Position 152 (Gly-152) interacts with D-ribose 5-phosphate. Residue Arg-164 participates in D-glyceraldehyde 3-phosphate binding. D-ribose 5-phosphate-binding positions include Gly-213 and 234 to 235 (GS).

It belongs to the PdxS/SNZ family. As to quaternary structure, in the presence of PdxT, forms a dodecamer of heterodimers.

It carries out the reaction aldehydo-D-ribose 5-phosphate + D-glyceraldehyde 3-phosphate + L-glutamine = pyridoxal 5'-phosphate + L-glutamate + phosphate + 3 H2O + H(+). Its pathway is cofactor biosynthesis; pyridoxal 5'-phosphate biosynthesis. Functionally, catalyzes the formation of pyridoxal 5'-phosphate from ribose 5-phosphate (RBP), glyceraldehyde 3-phosphate (G3P) and ammonia. The ammonia is provided by the PdxT subunit. Can also use ribulose 5-phosphate and dihydroxyacetone phosphate as substrates, resulting from enzyme-catalyzed isomerization of RBP and G3P, respectively. The polypeptide is Pyridoxal 5'-phosphate synthase subunit PdxS (Dehalococcoides mccartyi (strain ATCC BAA-2266 / KCTC 15142 / 195) (Dehalococcoides ethenogenes (strain 195))).